Reading from the N-terminus, the 1219-residue chain is Myosin-5 (1219 aa).

Residues 1–12 (MAILKRGARKKV) are compositionally biased toward basic residues. Residues 1 to 20 (MAILKRGARKKVHQEPAKRS) are disordered. The region spanning 36 to 715 (VGVSDLTLLS…TLFALEHMRD (680 aa)) is the Myosin motor domain. ATP is bound at residue 129-136 (GESGAGKT). Position 357 is a phosphoserine (Ser-357). Residue Tyr-359 is modified to Phosphotyrosine. The segment at 404 to 486 (SIGILDIYGF…PGIFAAMNDS (83 aa)) is actin-binding. IQ domains lie at 719–739 (HNMA…RIDA) and 740–765 (ATKI…YGTK). Positions 771-961 (KERRSMSLLG…TISVRRGNPP (191 aa)) constitute a TH1 domain. The residue at position 777 (Ser-777) is a Phosphoserine. Over residues 951–964 (STISVRRGNPPNSQ) the composition is skewed to polar residues. Disordered regions lie at residues 951–1106 (STIS…SELP) and 1139–1167 (TAYM…VLNS). A compositionally biased stretch (low complexity) spans 974-984 (SISSGYHASSS). Ser-992 bears the Phosphoserine mark. The segment covering 1030–1041 (NPASTLTASQSN) has biased composition (polar residues). Positions 1048–1063 (TAATRATPAATPAAAA) are enriched in low complexity. Residues 1072 to 1083 (IPPPPPPPPPSS) are compositionally biased toward pro residues. The region spanning 1085–1147 (PKEPMFEAAY…PTAYMKPHSG (63 aa)) is the SH3 domain. A Phosphoserine modification is found at Ser-1205.

This sequence belongs to the TRAFAC class myosin-kinesin ATPase superfamily. Myosin family. As to quaternary structure, interacts (via myosin motor domain) with SHE4; this interaction is important for proper localization and may regulate the interaction of the motor domain with actin. Interacts (via SH3 domain) with VRP1; this interaction is required for localization to sites of polarized growth and may regulate the interaction of the tail domain with actin. Interacts (via SH3 domain) with PAN1; this interaction is important for late stages of endocytopsis. Interacts (via SH3 domain) with BBC1 and LAS17. Interacts (via C-terminal acidic tail) with ARC19 and ARC40; ARC19 and ARC40 are Arp2/3 complex subunits. Interacts with BZZ1, PKH1, PKH2, YPK1 and YPK2. Post-translationally, phosphorylation of the TEDS site (Ser-357) is required for the polarization of the actin cytoskeleton and for ligand-induced, but not for constitutive internalization of STE2. Phosphorylation probably activates the myosin-I ATPase activity. Ser-357 is phosphorylated by YPK2 in vitro.

It is found in the cytoplasm. It localises to the cytoskeleton. Its subcellular location is the actin patch. In terms of biological role, one of two redundant type-I myosins implicated in the organization of the actin cytoskeleton. Required for proper actin cytoskeleton polarization and for the internalization step in endocytosis. At the cell cortex, assembles in patch-like structures together with proteins from the actin-polymerizing machinery and promotes actin assembly. Functions redundantly with LAS17 as actin nucleation-promoting factor (NPF) for the Arp2/3 complex. Motor domain phosphorylation by PAK kinases CLA4 and STE20 promotes CDC42-regulated actin assembly. Functions together with the NPF PAN1 in late stages of endocytosis. Motor domain phosphorylation by PDK1 kinases PKH1 and PKH2, and by SGK kinases YPK1 and YPK2, promotes ligand-induced, but not constitutive endocytosis of the G protein-coupled receptor STE2. This chain is Myosin-5 (MYO5), found in Saccharomyces cerevisiae (strain YJM789) (Baker's yeast).